A 276-amino-acid chain; its full sequence is Shikimate dehydrogenase (NADP(+)) (276 aa).

Shikimate-binding positions include 15–17 (SKS) and Thr-62. Lys-66 acts as the Proton acceptor in catalysis. Glu-78 provides a ligand contact to NADP(+). Residues Asn-87 and Asp-103 each contribute to the shikimate site. Residues 127-131 (GAGGV), 150-155 (NRTHIK), and Met-214 contribute to the NADP(+) site. Residue Tyr-216 coordinates shikimate. Gly-239 provides a ligand contact to NADP(+).

This sequence belongs to the shikimate dehydrogenase family. As to quaternary structure, homodimer.

The catalysed reaction is shikimate + NADP(+) = 3-dehydroshikimate + NADPH + H(+). The protein operates within metabolic intermediate biosynthesis; chorismate biosynthesis; chorismate from D-erythrose 4-phosphate and phosphoenolpyruvate: step 4/7. In terms of biological role, involved in the biosynthesis of the chorismate, which leads to the biosynthesis of aromatic amino acids. Catalyzes the reversible NADPH linked reduction of 3-dehydroshikimate (DHSA) to yield shikimate (SA). The chain is Shikimate dehydrogenase (NADP(+)) from Haemophilus ducreyi (strain 35000HP / ATCC 700724).